A 338-amino-acid polypeptide reads, in one-letter code: Nicotinate-nucleotide--dimethylbenzimidazole phosphoribosyltransferase (338 aa).

The active-site Proton acceptor is Glu305.

This sequence belongs to the CobT family.

The enzyme catalyses 5,6-dimethylbenzimidazole + nicotinate beta-D-ribonucleotide = alpha-ribazole 5'-phosphate + nicotinate + H(+). Its pathway is nucleoside biosynthesis; alpha-ribazole biosynthesis; alpha-ribazole from 5,6-dimethylbenzimidazole: step 1/2. In terms of biological role, catalyzes the synthesis of alpha-ribazole-5'-phosphate from nicotinate mononucleotide (NAMN) and 5,6-dimethylbenzimidazole (DMB). The protein is Nicotinate-nucleotide--dimethylbenzimidazole phosphoribosyltransferase of Rhizobium leguminosarum bv. trifolii (strain WSM2304).